The following is a 385-amino-acid chain: Cytochrome b (385 aa).

The next 4 helical transmembrane spans lie at 32–52 (FGSL…TLAM), 76–98 (WFIR…AHMG), 113–133 (PWSI…MGYV), and 179–199 (FFAL…LHLI). His82 and His96 together coordinate heme b. Heme b-binding residues include His183 and His197. His202 is an a ubiquinone binding site. The next 4 helical transmembrane spans lie at 225 to 245 (YSFK…LFVF), 289 to 309 (LGGV…PIVD), 321 to 341 (ISKL…VLGQ), and 348 to 368 (FIVL…ILLP).

Belongs to the cytochrome b family. In terms of assembly, fungal cytochrome b-c1 complex contains 10 subunits; 3 respiratory subunits, 2 core proteins and 5 low-molecular weight proteins. Cytochrome b-c1 complex is a homodimer. Heme b is required as a cofactor.

The protein localises to the mitochondrion inner membrane. Functionally, component of the ubiquinol-cytochrome c reductase complex (complex III or cytochrome b-c1 complex) that is part of the mitochondrial respiratory chain. The b-c1 complex mediates electron transfer from ubiquinol to cytochrome c. Contributes to the generation of a proton gradient across the mitochondrial membrane that is then used for ATP synthesis. This chain is Cytochrome b (COB), found in Yarrowia lipolytica (strain CLIB 122 / E 150) (Yeast).